A 216-amino-acid chain; its full sequence is Superoxide dismutase [Cu-Zn], chloroplastic (216 aa).

The N-terminal 62 residues, 1–62, are a transit peptide targeting the chloroplast; it reads MACHSALAAV…ASPRSMVVVA (62 aa). 3 residues coordinate Cu cation: histidine 108, histidine 110, and histidine 125. An intrachain disulfide couples cysteine 119 to cysteine 208. Zn(2+) contacts are provided by histidine 125, histidine 133, histidine 142, and aspartate 145. Histidine 182 provides a ligand contact to Cu cation.

This sequence belongs to the Cu-Zn superoxide dismutase family. In terms of assembly, homotetramer. The cofactor is Cu cation. Zn(2+) serves as cofactor.

It is found in the plastid. Its subcellular location is the chloroplast. The enzyme catalyses 2 superoxide + 2 H(+) = H2O2 + O2. In terms of biological role, destroys radicals which are normally produced within the cells and which are toxic to biological systems. The protein is Superoxide dismutase [Cu-Zn], chloroplastic (SODCP) of Zantedeschia aethiopica (White calla lily).